The chain runs to 173 residues: Crossover junction endodeoxyribonuclease RuvC (173 aa).

Catalysis depends on residues Asp-8, Glu-67, and Asp-139. The Mg(2+) site is built by Asp-8, Glu-67, and Asp-139.

The protein belongs to the RuvC family. As to quaternary structure, homodimer which binds Holliday junction (HJ) DNA. The HJ becomes 2-fold symmetrical on binding to RuvC with unstacked arms; it has a different conformation from HJ DNA in complex with RuvA. In the full resolvosome a probable DNA-RuvA(4)-RuvB(12)-RuvC(2) complex forms which resolves the HJ. It depends on Mg(2+) as a cofactor.

The protein resides in the cytoplasm. The enzyme catalyses Endonucleolytic cleavage at a junction such as a reciprocal single-stranded crossover between two homologous DNA duplexes (Holliday junction).. Its function is as follows. The RuvA-RuvB-RuvC complex processes Holliday junction (HJ) DNA during genetic recombination and DNA repair. Endonuclease that resolves HJ intermediates. Cleaves cruciform DNA by making single-stranded nicks across the HJ at symmetrical positions within the homologous arms, yielding a 5'-phosphate and a 3'-hydroxyl group; requires a central core of homology in the junction. The consensus cleavage sequence is 5'-(A/T)TT(C/G)-3'. Cleavage occurs on the 3'-side of the TT dinucleotide at the point of strand exchange. HJ branch migration catalyzed by RuvA-RuvB allows RuvC to scan DNA until it finds its consensus sequence, where it cleaves and resolves the cruciform DNA. In Salmonella dublin (strain CT_02021853), this protein is Crossover junction endodeoxyribonuclease RuvC.